The sequence spans 203 residues: Ras-like protein family member 10B (203 aa).

Positions 1–203 (MVSTYRVAVL…ALRRNRCAIM (203 aa)) are small GTPase-like. GTP is bound at residue 11-18 (GARGVGKS). The Effector region signature appears at 33–42 (CVPTTARRLY). Residues 59–62 (DFPP) and 128–131 (NKRD) contribute to the GTP site. Residue cysteine 200 is modified to Cysteine methyl ester. Residue cysteine 200 is the site of S-geranylgeranyl cysteine attachment. Positions 201-203 (AIM) are cleaved as a propeptide — removed in mature form.

It belongs to the small GTPase superfamily. Ras family. In terms of assembly, interacts with CADPS. In terms of tissue distribution, expressed at high levels in skeletal muscle and, at much lower levels, in heart, brain and pancreas.

The protein localises to the cell membrane. The catalysed reaction is GTP + H2O = GDP + phosphate + H(+). Its function is as follows. May facilitate the release of atrial natriuretic peptide by cardiomyocytes and hence play a role in the regulation of arterial pressure. This is Ras-like protein family member 10B (RASL10B) from Homo sapiens (Human).